Consider the following 118-residue polypeptide: Probable non-functional immunoglobulin lambda variable 2-33 (118 aa).

Positions 1-19 (MAWALLLLTLLTQGTGSWA) are cleaved as a signal peptide. The framework-1 stretch occupies residues 20-44 (QSALTQPPFVSGAPGQSVTISCTGT). One can recognise an Ig-like domain in the interval 34-118 (GQSVTISCTG…CSLYSSSYTF (85 aa)). A disulfide bond links Cys-41 and Cys-109. Residues 45–53 (SSDVGDYDH) are complementarity-determining-1. Positions 54-70 (VFWYQKRLSTTSRLLIY) are framework-2. Residues 71–73 (NVN) form a complementarity-determining-2 region. A framework-3 region spans residues 74–109 (TRPSGISDLFSGSKSGNMASLTISGLKSEVEANYHC). A complementarity-determining-3 region spans residues 110–118 (SLYSSSYTF).

Immunoglobulins are composed of two identical heavy chains and two identical light chains; disulfide-linked.

The protein resides in the secreted. Its subcellular location is the cell membrane. Functionally, probable non-functional open reading frame (ORF) of V region of the variable domain of immunoglobulin light chains. Non-functional ORF generally cannot participate in the synthesis of a productive immunoglobulin chain due to altered V-(D)-J or switch recombination and/or splicing site (at mRNA level) and/or conserved amino acid change (protein level). Immunoglobulins, also known as antibodies, are membrane-bound or secreted glycoproteins produced by B lymphocytes. In the recognition phase of humoral immunity, the membrane-bound immunoglobulins serve as receptors which, upon binding of a specific antigen, trigger the clonal expansion and differentiation of B lymphocytes into immunoglobulins-secreting plasma cells. Secreted immunoglobulins mediate the effector phase of humoral immunity, which results in the elimination of bound antigens. The antigen binding site is formed by the variable domain of one heavy chain, together with that of its associated light chain. Thus, each immunoglobulin has two antigen binding sites with remarkable affinity for a particular antigen. The variable domains are assembled by a process called V-(D)-J rearrangement and can then be subjected to somatic hypermutations which, after exposure to antigen and selection, allow affinity maturation for a particular antigen. This is Probable non-functional immunoglobulin lambda variable 2-33 from Homo sapiens (Human).